The following is a 417-amino-acid chain: Serine hydroxymethyltransferase (417 aa).

(6S)-5,6,7,8-tetrahydrofolate contacts are provided by residues Leu121 and 125 to 127 (GHL). Residue Lys230 is modified to N6-(pyridoxal phosphate)lysine. 355–357 (SPF) contributes to the (6S)-5,6,7,8-tetrahydrofolate binding site.

The protein belongs to the SHMT family. Homodimer. It depends on pyridoxal 5'-phosphate as a cofactor.

It is found in the cytoplasm. The catalysed reaction is (6R)-5,10-methylene-5,6,7,8-tetrahydrofolate + glycine + H2O = (6S)-5,6,7,8-tetrahydrofolate + L-serine. It functions in the pathway one-carbon metabolism; tetrahydrofolate interconversion. It participates in amino-acid biosynthesis; glycine biosynthesis; glycine from L-serine: step 1/1. Functionally, catalyzes the reversible interconversion of serine and glycine with tetrahydrofolate (THF) serving as the one-carbon carrier. This reaction serves as the major source of one-carbon groups required for the biosynthesis of purines, thymidylate, methionine, and other important biomolecules. Also exhibits THF-independent aldolase activity toward beta-hydroxyamino acids, producing glycine and aldehydes, via a retro-aldol mechanism. The chain is Serine hydroxymethyltransferase from Legionella pneumophila (strain Lens).